A 140-amino-acid polypeptide reads, in one-letter code: ATP synthase epsilon chain (140 aa).

The protein belongs to the ATPase epsilon chain family. In terms of assembly, F-type ATPases have 2 components, CF(1) - the catalytic core - and CF(0) - the membrane proton channel. CF(1) has five subunits: alpha(3), beta(3), gamma(1), delta(1), epsilon(1). CF(0) has three main subunits: a, b and c.

The protein resides in the cell inner membrane. Its function is as follows. Produces ATP from ADP in the presence of a proton gradient across the membrane. The sequence is that of ATP synthase epsilon chain from Yersinia pseudotuberculosis serotype O:1b (strain IP 31758).